The sequence spans 795 residues: Delta-1-pyrroline-5-carboxylate synthase (795 aa).

Positions 1–361 (MLSQVYRCGF…FFSEVKPAGP (361 aa)) are glutamate 5-kinase. Residues Ser117, Asp223, and Asn246 each coordinate substrate. Residues 266–267 (SD) and 305–311 (MGGMEAK) contribute to the ATP site. N6-succinyllysine is present on residues Lys311, Lys347, and Lys550. Positions 362-795 (TVEQQGEMAR…NLPIPQRNTN (434 aa)) are gamma-glutamyl phosphate reductase.

This sequence in the N-terminal section; belongs to the glutamate 5-kinase family. The protein in the C-terminal section; belongs to the gamma-glutamyl phosphate reductase family. In terms of assembly, can form homodimers/multimers.

The protein localises to the mitochondrion. It is found in the mitochondrion matrix. It carries out the reaction L-glutamate + ATP = L-glutamyl 5-phosphate + ADP. The catalysed reaction is L-glutamate 5-semialdehyde + phosphate + NADP(+) = L-glutamyl 5-phosphate + NADPH + H(+). Its pathway is amino-acid biosynthesis; L-proline biosynthesis; L-glutamate 5-semialdehyde from L-glutamate: step 1/2. The protein operates within amino-acid biosynthesis; L-proline biosynthesis; L-glutamate 5-semialdehyde from L-glutamate: step 2/2. Isoform Short: Inhibited by L-ornithine with a Ki of approximately 0.25 mm. Isoform Long: Insensitive to ornithine inhibition. This is due to the two amino acid insert which abolishes feedback inhibition of P5CS activity by L-ornithine. Bifunctional enzyme that converts glutamate to glutamate 5-semialdehyde, an intermediate in the biosynthesis of proline, ornithine and arginine. This chain is Delta-1-pyrroline-5-carboxylate synthase (ALDH18A1), found in Homo sapiens (Human).